Here is a 348-residue protein sequence, read N- to C-terminus: Protein RecA (348 aa).

64 to 71 lines the ATP pocket; it reads GPESSGKT. Basic and acidic residues predominate over residues 325 to 335; the sequence is YEIDGANKEPL. A disordered region spans residues 325-348; that stretch reads YEIDGANKEPLEETEETLSLLDDE. Residues 336–348 are compositionally biased toward acidic residues; it reads EETEETLSLLDDE.

The protein belongs to the RecA family.

It is found in the cytoplasm. Can catalyze the hydrolysis of ATP in the presence of single-stranded DNA, the ATP-dependent uptake of single-stranded DNA by duplex DNA, and the ATP-dependent hybridization of homologous single-stranded DNAs. It interacts with LexA causing its activation and leading to its autocatalytic cleavage. The polypeptide is Protein RecA (Listeria welshimeri serovar 6b (strain ATCC 35897 / DSM 20650 / CCUG 15529 / CIP 8149 / NCTC 11857 / SLCC 5334 / V8)).